Reading from the N-terminus, the 381-residue chain is Putative MgpC-like protein MPN_503 (381 aa).

Residues 1 to 109 (MNGVAQDKVH…TDSQQSGHNS (109 aa)) are disordered. Polar residues predominate over residues 13 to 31 (EQTTQWNQQASQKNLTNNP). 2 stretches are compositionally biased toward basic and acidic residues: residues 40–51 (KLDKGRAYRKLN) and 61–73 (DSTK…DKDG). Polar residues predominate over residues 89-109 (VSSTESQMAAVTDSQQSGHNS).

The protein belongs to the MgpC family.

This chain is Putative MgpC-like protein MPN_503, found in Mycoplasma pneumoniae (strain ATCC 29342 / M129 / Subtype 1) (Mycoplasmoides pneumoniae).